Reading from the N-terminus, the 291-residue chain is Ribonuclease Z (291 aa).

Zn(2+) is bound by residues H61, H63, D65, H66, H133, D201, and H257. Catalysis depends on D65, which acts as the Proton acceptor.

This sequence belongs to the RNase Z family. As to quaternary structure, homodimer. It depends on Zn(2+) as a cofactor.

It carries out the reaction Endonucleolytic cleavage of RNA, removing extra 3' nucleotides from tRNA precursor, generating 3' termini of tRNAs. A 3'-hydroxy group is left at the tRNA terminus and a 5'-phosphoryl group is left at the trailer molecule.. Functionally, zinc phosphodiesterase, which displays some tRNA 3'-processing endonuclease activity. Probably involved in tRNA maturation, by removing a 3'-trailer from precursor tRNA. This chain is Ribonuclease Z, found in Saccharolobus islandicus (strain L.S.2.15 / Lassen #1) (Sulfolobus islandicus).